The following is a 652-amino-acid chain: MTSASPEDQNAPVGCPKGARRRRPISVIGGVSLYGTNQTEELDNLLTQPASRPPMPAHQVPPYKAVSARFRPFTFSQSTPIGLDRVGRRRQMRASNVSSDGGTEPSALVDDNGSEEDFSYEDLCQASPRYLQPGGEQLAINELISDGNVVCAEALWDHVTMDDQELGFKAGDVIQVLEASNKDWWWGRSEDKEAWFPASFVRLRVNQEELSENSSSTPSEEQDEEASQSRHRHCENKQQMRTNVIREIMDTERVYIKHLRDICEGYIRQCRKHTGMFTVAQLATIFGNIEDIYKFQRKFLKDLEKQYNKEEPHLSEIGSCFLQNQEGFAIYSEYCNNHPGACLELANLMKQGKYRHFFEACRLLQQMIDIAIDGFLLTPVQKICKYPLQLAELLKYTTQEHGDYSNIKAAYEAMKNVACLINERKRKLESIDKIARWQVSIVGWEGLDILDRSSELIHSGELTKITKQGKSQQRTFFLFDHQLVSCKKDLLRRDMLYYKGRLDMDEMELVDLGDGRDKDCNLSVKNAFKLVSRTTDEVYLFCAKKQEDKARWLQACADERRRVQEDKEMGMEISENQKKLAMLNAQKAGHGKSKGYNRCPVAPPHQGLHPIHQRHITMPTSVPQQQVFGLAEPKRKSSLFWHTFNRLTPFRK.

The segment at 1–24 is disordered; it reads MTSASPEDQNAPVGCPKGARRRRP. Ser-78 carries the phosphoserine modification. Positions 81-108 are disordered; sequence IGLDRVGRRRQMRASNVSSDGGTEPSAL. The ABR (APC-binding region) domain stretch occupies residues 98–150; sequence SSDGGTEPSALVDDNGSEEDFSYEDLCQASPRYLQPGGEQLAINELISDGNVV. Position 114 is a phosphoserine (Ser-114). The 60-residue stretch at 147–206 folds into the SH3 domain; that stretch reads GNVVCAEALWDHVTMDDQELGFKAGDVIQVLEASNKDWWWGRSEDKEAWFPASFVRLRVN. Residues 209–235 are disordered; sequence ELSENSSSTPSEEQDEEASQSRHRHCE. The DH domain maps to 240 to 424; it reads MRTNVIREIM…KNVACLINER (185 aa). The PH domain maps to 455-561; sequence ELIHSGELTK…WLQACADERR (107 aa). Positions 561 to 652 are C-terminal tail; sequence RRVQEDKEMG…TFNRLTPFRK (92 aa).

In terms of assembly, interacts (via ABR and SH3 domain) with APC. The binding of APC enhances its GEF activity by relieving it from an autoinhibitory conformation, in which the ABR and SH3 domains are associated with the C-terminal tail. Interacts (via C-terminal tail) with PPP1R9B (via C-terminus). Interacts with RAC1. As to expression, expressed at high levels in the placenta, spleen and kidney, at moderate levels in lung, small intestine, liver, brain and heart, and at low levels in skeletal muscle. Expression is aberrantly enhanced in most colorectal tumors.

It localises to the cytoplasm. The protein resides in the cell projection. Its subcellular location is the filopodium. The protein localises to the lamellipodium. It is found in the ruffle membrane. It localises to the podosome. Both the ABR and the SH3 domains contribute to maintaining the protein in an inhibited conformation by associating with the C-terminal tail. Binding of these domains to the C-terminal tail inhibits the activity of the protein by blocking a region that is required for its GEF activity. Its function is as follows. Acts as a guanine nucleotide exchange factor (GEF) for RHOA, RAC1 and CDC42 GTPases. Regulates cell migration and adhesion assembly and disassembly through a RAC1, PI3K, RHOA and AKT1-dependent mechanism. Increases both RAC1 and CDC42 activity, but decreases the amount of active RHOA. Required for MMP9 up-regulation via the JNK signaling pathway in colorectal tumor cells. Involved in tumor angiogenesis and may play a role in intestinal adenoma formation and tumor progression. This is Spermatogenesis-associated protein 13 from Homo sapiens (Human).